A 229-amino-acid chain; its full sequence is Extracellular small neutral protease (229 aa).

An N-terminal signal peptide occupies residues 1 to 28 (MRMPLSVLTAAGLSLATLGLGTAGPASA). Positions 29 to 81 (TPTAEGAPVVAYDGSPSAGSPADAKAEAAANRAFFEAVLRSVAEKRAANPKST) are excised as a propeptide. Ca(2+)-binding residues include Asp-159 and Thr-161. Residue His-166 participates in Zn(2+) binding. Glu-167 is a catalytic residue. 2 residues coordinate Zn(2+): His-170 and Asp-176. Residues Cys-182 and Cys-195 are joined by a disulfide bond.

Belongs to the peptidase M7 family. As to quaternary structure, monomer. Requires Ca(2+) as cofactor. Zn(2+) is required as a cofactor.

It localises to the secreted. It catalyses the reaction Hydrolyzes proteins with a preference for Tyr or Phe in the P1' position. Has no action on amino-acid p-nitroanilides.. In terms of biological role, milk hydrolyzing. This chain is Extracellular small neutral protease (snpA), found in Streptomyces sp. (strain C5).